A 353-amino-acid chain; its full sequence is Biotin synthase (353 aa).

Positions 51 to 270 (NEVQCNQLLN…IALARIMMPK (220 aa)) constitute a Radical SAM core domain. [4Fe-4S] cluster-binding residues include C66, C70, and C73. Positions 110, 141, 201, and 274 each coordinate [2Fe-2S] cluster. The segment at 330–353 (APVEAHSHDHDHDHHDHHHGHSHS) is disordered. Basic and acidic residues predominate over residues 334–343 (AHSHDHDHDH). Residues 344–353 (HDHHHGHSHS) are compositionally biased toward basic residues.

The protein belongs to the radical SAM superfamily. Biotin synthase family. As to quaternary structure, homodimer. The cofactor is [4Fe-4S] cluster. Requires [2Fe-2S] cluster as cofactor.

It carries out the reaction (4R,5S)-dethiobiotin + (sulfur carrier)-SH + 2 reduced [2Fe-2S]-[ferredoxin] + 2 S-adenosyl-L-methionine = (sulfur carrier)-H + biotin + 2 5'-deoxyadenosine + 2 L-methionine + 2 oxidized [2Fe-2S]-[ferredoxin]. Its pathway is cofactor biosynthesis; biotin biosynthesis; biotin from 7,8-diaminononanoate: step 2/2. Functionally, catalyzes the conversion of dethiobiotin (DTB) to biotin by the insertion of a sulfur atom into dethiobiotin via a radical-based mechanism. This Rhodopseudomonas palustris (strain HaA2) protein is Biotin synthase.